The sequence spans 316 residues: C1GALT1-specific chaperone 1 (316 aa).

The Cytoplasmic segment spans residues 1 to 6 (MLSESS). The helical; Signal-anchor for type II membrane protein transmembrane segment at 7–26 (SFLKGVMLGSIFCALITMLG) threads the bilayer. Topologically, residues 27–316 (HIRIGNRMHH…FLPPNGSEND (290 aa)) are lumenal.

The protein belongs to the glycosyltransferase 31 family. Beta3-Gal-T subfamily. In terms of assembly, associates with core 1 beta-3-galactosyltransferase (C1GALT1), probably not with the soluble active form.

It localises to the membrane. Functionally, probable chaperone required for the generation of 1 O-glycan Gal-beta1-3GalNAc-alpha1-Ser/Thr (T antigen), which is a precursor for many extended O-glycans in glycoproteins. Probably acts as a specific molecular chaperone assisting the folding/stability of core 1 beta-3-galactosyltransferase (C1GALT1). This is C1GALT1-specific chaperone 1 (C1galt1c1) from Rattus norvegicus (Rat).